Reading from the N-terminus, the 282-residue chain is NADPH-dependent 7-cyano-7-deazaguanine reductase (282 aa).

Residue I90–S92 coordinates substrate. S92–K93 lines the NADPH pocket. The active-site Thioimide intermediate is C190. D197 serves as the catalytic Proton donor. H229–E230 lines the substrate pocket. R258–G259 lines the NADPH pocket.

This sequence belongs to the GTP cyclohydrolase I family. QueF type 2 subfamily. As to quaternary structure, homodimer.

The protein localises to the cytoplasm. The catalysed reaction is 7-aminomethyl-7-carbaguanine + 2 NADP(+) = 7-cyano-7-deazaguanine + 2 NADPH + 3 H(+). It functions in the pathway tRNA modification; tRNA-queuosine biosynthesis. In terms of biological role, catalyzes the NADPH-dependent reduction of 7-cyano-7-deazaguanine (preQ0) to 7-aminomethyl-7-deazaguanine (preQ1). In Aeromonas salmonicida (strain A449), this protein is NADPH-dependent 7-cyano-7-deazaguanine reductase.